We begin with the raw amino-acid sequence, 119 residues long: Large ribosomal subunit protein bL20 (119 aa).

It belongs to the bacterial ribosomal protein bL20 family.

Functionally, binds directly to 23S ribosomal RNA and is necessary for the in vitro assembly process of the 50S ribosomal subunit. It is not involved in the protein synthesizing functions of that subunit. In Streptococcus pyogenes serotype M1, this protein is Large ribosomal subunit protein bL20.